Here is a 277-residue protein sequence, read N- to C-terminus: Large ribosomal subunit protein uL2 (277 aa).

Disordered regions lie at residues 32 to 58 (KSLTKGKVSRAGRDSSGRISVRRRGGG) and 225 to 277 (VAMN…RRNN).

Belongs to the universal ribosomal protein uL2 family. Part of the 50S ribosomal subunit. Forms a bridge to the 30S subunit in the 70S ribosome.

One of the primary rRNA binding proteins. Required for association of the 30S and 50S subunits to form the 70S ribosome, for tRNA binding and peptide bond formation. It has been suggested to have peptidyltransferase activity; this is somewhat controversial. Makes several contacts with the 16S rRNA in the 70S ribosome. In Borrelia duttonii (strain Ly), this protein is Large ribosomal subunit protein uL2.